We begin with the raw amino-acid sequence, 211 residues long: Thiamine-phosphate synthase (211 aa).

4-amino-2-methyl-5-(diphosphooxymethyl)pyrimidine is bound by residues 44–48 (QYRNK) and asparagine 75. Residues aspartate 76 and aspartate 95 each coordinate Mg(2+). Residue serine 114 coordinates 4-amino-2-methyl-5-(diphosphooxymethyl)pyrimidine. 2-[(2R,5Z)-2-carboxy-4-methylthiazol-5(2H)-ylidene]ethyl phosphate is bound at residue 140–142 (TKS). Residue lysine 143 participates in 4-amino-2-methyl-5-(diphosphooxymethyl)pyrimidine binding. Glycine 171 provides a ligand contact to 2-[(2R,5Z)-2-carboxy-4-methylthiazol-5(2H)-ylidene]ethyl phosphate.

It belongs to the thiamine-phosphate synthase family. Mg(2+) is required as a cofactor.

The catalysed reaction is 2-[(2R,5Z)-2-carboxy-4-methylthiazol-5(2H)-ylidene]ethyl phosphate + 4-amino-2-methyl-5-(diphosphooxymethyl)pyrimidine + 2 H(+) = thiamine phosphate + CO2 + diphosphate. It catalyses the reaction 2-(2-carboxy-4-methylthiazol-5-yl)ethyl phosphate + 4-amino-2-methyl-5-(diphosphooxymethyl)pyrimidine + 2 H(+) = thiamine phosphate + CO2 + diphosphate. It carries out the reaction 4-methyl-5-(2-phosphooxyethyl)-thiazole + 4-amino-2-methyl-5-(diphosphooxymethyl)pyrimidine + H(+) = thiamine phosphate + diphosphate. Its pathway is cofactor biosynthesis; thiamine diphosphate biosynthesis; thiamine phosphate from 4-amino-2-methyl-5-diphosphomethylpyrimidine and 4-methyl-5-(2-phosphoethyl)-thiazole: step 1/1. Functionally, condenses 4-methyl-5-(beta-hydroxyethyl)thiazole monophosphate (THZ-P) and 2-methyl-4-amino-5-hydroxymethyl pyrimidine pyrophosphate (HMP-PP) to form thiamine monophosphate (TMP). This Koribacter versatilis (strain Ellin345) protein is Thiamine-phosphate synthase.